Here is a 169-residue protein sequence, read N- to C-terminus: Lutropin/choriogonadotropin subunit beta (169 aa).

An N-terminal signal peptide occupies residues 1–20 (MEMLQGLLLWMLLSVGGVWA). 6 disulfides stabilise this stretch: Cys29–Cys77, Cys43–Cys92, Cys46–Cys130, Cys54–Cys108, Cys58–Cys110, and Cys113–Cys120. The N-linked (GlcNAc...) asparagine glycan is linked to Asn33. Residues 131 to 169 (APQASSSSKDPPSQPLTSTSTPTPGASNRSSHPLPIKTS) are disordered. The span at 145–154 (PLTSTSTPTP) shows a compositional bias: low complexity. Residues 155-169 (GASNRSSHPLPIKTS) show a composition bias toward polar residues. Asn158 carries N-linked (GlcNAc...) asparagine glycosylation.

It belongs to the glycoprotein hormones subunit beta family. In terms of assembly, heterodimer of a common alpha chain and a unique beta chain which confers biological specificity to thyrotropin, lutropin, follitropin and gonadotropin.

Its subcellular location is the secreted. Its function is as follows. Promotes spermatogenesis and ovulation by stimulating the testes and ovaries to synthesize steroids. The chain is Lutropin/choriogonadotropin subunit beta (LHB) from Equus quagga burchellii (Burchell's zebra).